A 626-amino-acid chain; its full sequence is Basic helix-loop-helix ARNT-like protein 1 (626 aa).

Residues 1 to 58 are disordered; it reads MADQRMDISSTISDFMSPGPTDLLSSSLGTSGVDCNRKRKGSATDYQESMDTDKDDPH. A Phosphoserine; by GSK3-beta modification is found at serine 17. Over residues 17 to 32 the composition is skewed to low complexity; sequence SPGPTDLLSSSLGTSG. Threonine 21 is modified (phosphothreonine; by GSK3-beta). Residues 36 to 41 carry the Nuclear localization signal motif; it reads NRKRKG. In terms of domain architecture, bHLH spans 72–125; that stretch reads NAREAHSQIEKRRRDKMNSFIDELASLVPTCNAMSRKLDKLTVLRMAVQHMKTL. A Phosphoserine modification is found at serine 78. Serine 90 carries the post-translational modification Phosphoserine; by CK2. Positions 142–152 match the Nuclear export signal 1 motif; that stretch reads LSDDELKHLIL. One can recognise a PAS 1 domain in the interval 143-215; it reads SDDELKHLIL…EQLSSSDTAP (73 aa). A Glycyl lysine isopeptide (Lys-Gly) (interchain with G-Cter in SUMO2 and SUMO3) cross-link involves residue lysine 252. A Glycyl lysine isopeptide (Lys-Gly) (interchain with G-Cter in SUMO); alternate cross-link involves residue lysine 259. Lysine 259 is covalently cross-linked (Glycyl lysine isopeptide (Lys-Gly) (interchain with G-Cter in SUMO2); alternate). Positions 326–396 constitute a PAS 2 domain; sequence PQPVNGEIRV…ECHRQVLQTR (71 aa). The short motif at 361–369 is the Nuclear export signal 2 element; sequence LAYLPQELL. The 44-residue stretch at 401-444 folds into the PAC domain; sequence TNCYKFKIKDGSFITLRSRWFSFMNPWTKEVEYIVSTNTVVLAN. 2 disordered regions span residues 459-492 and 511-595; these read SPHS…RAGA and GSSP…SPSN. Residues 508–588 form an interaction with CIART region; that stretch reads RIRGSSPSSC…IGIDMIDNDQ (81 aa). The segment covering 511–521 has biased composition (low complexity); that stretch reads GSSPSSCGSSP. Lysine 538 bears the N6-acetyllysine mark.

As to quaternary structure, component of the circadian clock oscillator which includes the CRY1/2 proteins, CLOCK or NPAS2, BMAL1 or BMAL2, CSNK1D and/or CSNK1E, TIMELESS and the PER1/2/3 proteins. Forms a heterodimer with CLOCK. The CLOCK-BMAL1 heterodimer is required for E-box-dependent transactivation, for CLOCK nuclear translocation and degradation, and, for phosphorylation of both CLOCK and BMAL1. Part of a nuclear complex which also includes RACK1 and PRKCA; RACK1 and PRKCA are recruited to the complex in a circadian manner. Interacts with NPAS2. Interacts with EZH2. Interacts with SUMO3. Interacts with SIRT1. Interacts with AHR. Interacts with ID1, ID2 and ID3. Interacts with DDX4. Interacts with OGT. Interacts with EED and SUZ12. Interacts with MTA1. Interacts with CIART. Interacts with HSP90. Interacts with KAT2B and EP300. Interacts with BHLHE40/DEC1 and BHLHE41/DEC2. Interacts with RELB and the interaction is enhanced in the presence of CLOCK. Interacts with PER1, PER2, CRY1 and CRY2 and this interaction requires a translocation to the nucleus. Interaction of the CLOCK-BMAL1 heterodimer with PER or CRY inhibits transcription activation. Interaction of the CLOCK-BMAL1 with CRY1 is independent of DNA but with PER2 is off DNA. The CLOCK-BMAL1 heterodimer interacts with GSK3B. Interacts with KDM5A. Interacts with KMT2A; in a circadian manner. Interacts with UBE3A. Interacts with PRKCG. Interacts with MAGEL2. Interacts with NCOA2. Interacts with THRAP3. The CLOCK-BMAL1 heterodimer interacts with PASD1. Interacts with PASD1. Interacts with USP9X. Interacts with PIWIL2 (via PIWI domain). Interacts with HDAC3. Interacts with HNF4A. Post-translationally, ubiquitinated, leading to its proteasomal degradation. Deubiquitinated by USP9X. In terms of processing, O-glycosylated; contains O-GlcNAc. O-glycosylation by OGT prevents protein degradation by inhibiting ubiquitination. It also stabilizes the CLOCK-BMAL1 heterodimer thereby increasing CLOCK-BMAL1-mediated transcription of genes in the negative loop of the circadian clock such as PER1/2/3 and CRY1/2. Acetylated on Lys-538 by CLOCK during the repression phase of the circadian cycle. Acetylation facilitates recruitment of CRY1 protein and initiates the repression phase of the circadian cycle. Acetylated at Lys-538 by KAT5 during the activation phase of the cycle, leading to recruitment of the positive transcription elongation factor b (P-TEFb) and BRD4, followed by productive elongation of circadian transcripts. Deacetylated by SIRT1, which may result in decreased protein stability. Post-translationally, phosphorylated upon dimerization with CLOCK. Phosphorylation enhances the transcriptional activity, alters the subcellular localization and decreases the stability of the CLOCK-BMAL1 heterodimer by promoting its degradation. Phosphorylation shows circadian variations in the liver with a peak between CT10 to CT14. Phosphorylation at Ser-90 by CK2 is essential for its nuclear localization, its interaction with CLOCK and controls CLOCK nuclear entry. Dephosphorylation at Ser-78 is important for dimerization with CLOCK and transcriptional activity. In terms of processing, sumoylated on Lys-259 upon dimerization with CLOCK. Predominantly conjugated to poly-SUMO2/3 rather than SUMO1 and the level of these conjugates undergo rhythmic variation, peaking at CT9-CT12. Sumoylation localizes it exclusively to the PML body and promotes its ubiquitination in the PML body, ubiquitin-dependent proteasomal degradation and the transcriptional activity of the CLOCK-BMAL1 heterodimer. Undergoes lysosome-mediated degradation in a time-dependent manner in the liver.

The protein resides in the nucleus. Its subcellular location is the cytoplasm. The protein localises to the PML body. In terms of biological role, transcriptional activator which forms a core component of the circadian clock. The circadian clock, an internal time-keeping system, regulates various physiological processes through the generation of approximately 24 hour circadian rhythms in gene expression, which are translated into rhythms in metabolism and behavior. It is derived from the Latin roots 'circa' (about) and 'diem' (day) and acts as an important regulator of a wide array of physiological functions including metabolism, sleep, body temperature, blood pressure, endocrine, immune, cardiovascular, and renal function. Consists of two major components: the central clock, residing in the suprachiasmatic nucleus (SCN) of the brain, and the peripheral clocks that are present in nearly every tissue and organ system. Both the central and peripheral clocks can be reset by environmental cues, also known as Zeitgebers (German for 'timegivers'). The predominant Zeitgeber for the central clock is light, which is sensed by retina and signals directly to the SCN. The central clock entrains the peripheral clocks through neuronal and hormonal signals, body temperature and feeding-related cues, aligning all clocks with the external light/dark cycle. Circadian rhythms allow an organism to achieve temporal homeostasis with its environment at the molecular level by regulating gene expression to create a peak of protein expression once every 24 hours to control when a particular physiological process is most active with respect to the solar day. Transcription and translation of core clock components (CLOCK, NPAS2, BMAL1, BMAL2, PER1, PER2, PER3, CRY1 and CRY2) plays a critical role in rhythm generation, whereas delays imposed by post-translational modifications (PTMs) are important for determining the period (tau) of the rhythms (tau refers to the period of a rhythm and is the length, in time, of one complete cycle). A diurnal rhythm is synchronized with the day/night cycle, while the ultradian and infradian rhythms have a period shorter and longer than 24 hours, respectively. Disruptions in the circadian rhythms contribute to the pathology of cardiovascular diseases, cancer, metabolic syndromes and aging. A transcription/translation feedback loop (TTFL) forms the core of the molecular circadian clock mechanism. Transcription factors, CLOCK or NPAS2 and BMAL1 or BMAL2, form the positive limb of the feedback loop, act in the form of a heterodimer and activate the transcription of core clock genes and clock-controlled genes (involved in key metabolic processes), harboring E-box elements (5'-CACGTG-3') within their promoters. The core clock genes: PER1/2/3 and CRY1/2 which are transcriptional repressors form the negative limb of the feedback loop and interact with the CLOCK|NPAS2-BMAL1|BMAL2 heterodimer inhibiting its activity and thereby negatively regulating their own expression. This heterodimer also activates nuclear receptors NR1D1/2 and RORA/B/G, which form a second feedback loop and which activate and repress BMAL1 transcription, respectively. BMAL1 positively regulates myogenesis and negatively regulates adipogenesis via the transcriptional control of the genes of the canonical Wnt signaling pathway. Plays a role in normal pancreatic beta-cell function; regulates glucose-stimulated insulin secretion via the regulation of antioxidant genes NFE2L2/NRF2 and its targets SESN2, PRDX3, CCLC and CCLM. Negatively regulates the mTORC1 signaling pathway; regulates the expression of MTOR and DEPTOR. Controls diurnal oscillations of Ly6C inflammatory monocytes; rhythmic recruitment of the PRC2 complex imparts diurnal variation to chemokine expression that is necessary to sustain Ly6C monocyte rhythms. Regulates the expression of HSD3B2, STAR, PTGS2, CYP11A1, CYP19A1 and LHCGR in the ovary and also the genes involved in hair growth. Plays an important role in adult hippocampal neurogenesis by regulating the timely entry of neural stem/progenitor cells (NSPCs) into the cell cycle and the number of cell divisions that take place prior to cell-cycle exit. Regulates the circadian expression of CIART and KLF11. The CLOCK-BMAL1 heterodimer regulates the circadian expression of SERPINE1/PAI1, VWF, B3, CCRN4L/NOC, NAMPT, DBP, MYOD1, PPARGC1A, PPARGC1B, SIRT1, GYS2, F7, NGFR, GNRHR, BHLHE40/DEC1, ATF4, MTA1, KLF10 and also genes implicated in glucose and lipid metabolism. Promotes rhythmic chromatin opening, regulating the DNA accessibility of other transcription factors. The NPAS2-BMAL1 heterodimer positively regulates the expression of MAOA, F7 and LDHA and modulates the circadian rhythm of daytime contrast sensitivity by regulating the rhythmic expression of adenylate cyclase type 1 (ADCY1) in the retina. The preferred binding motif for the CLOCK-BMAL1 heterodimer is 5'-CACGTGA-3', which contains a flanking adenine nucleotide at the 3-prime end of the canonical 6-nucleotide E-box sequence. CLOCK specifically binds to the half-site 5'-CAC-3', while BMAL1 binds to the half-site 5'-GTGA-3'. The CLOCK-BMAL1 heterodimer also recognizes the non-canonical E-box motifs 5'-AACGTGA-3' and 5'-CATGTGA-3'. Essential for the rhythmic interaction of CLOCK with ASS1 and plays a critical role in positively regulating CLOCK-mediated acetylation of ASS1. Plays a role in protecting against lethal sepsis by limiting the expression of immune checkpoint protein CD274 in macrophages in a PKM2-dependent manner. Regulates the diurnal rhythms of skeletal muscle metabolism via transcriptional activation of genes promoting triglyceride synthesis (DGAT2) and metabolic efficiency (COQ10B). This is Basic helix-loop-helix ARNT-like protein 1 (BMAL1) from Mesocricetus auratus (Golden hamster).